The chain runs to 415 residues: 3-isopropylmalate dehydratase large subunit (415 aa).

Cys297, Cys355, and Cys358 together coordinate [4Fe-4S] cluster.

It belongs to the aconitase/IPM isomerase family. LeuC type 2 subfamily. As to quaternary structure, heterodimer of LeuC and LeuD. It depends on [4Fe-4S] cluster as a cofactor.

It carries out the reaction (2R,3S)-3-isopropylmalate = (2S)-2-isopropylmalate. It participates in amino-acid biosynthesis; L-leucine biosynthesis; L-leucine from 3-methyl-2-oxobutanoate: step 2/4. In terms of biological role, catalyzes the isomerization between 2-isopropylmalate and 3-isopropylmalate, via the formation of 2-isopropylmaleate. In Sulfurisphaera tokodaii (strain DSM 16993 / JCM 10545 / NBRC 100140 / 7) (Sulfolobus tokodaii), this protein is 3-isopropylmalate dehydratase large subunit.